The primary structure comprises 309 residues: Olfactory receptor 4B1 (309 aa).

At 1–23 (MASTSNVTELIFTGLFQDPAVQS) the chain is on the extracellular side. N6 is a glycosylation site (N-linked (GlcNAc...) asparagine). A helical membrane pass occupies residues 24–47 (VCFVVFLPVYLATVVGNGLIVLTV). The Cytoplasmic segment spans residues 48-55 (SISKSLDS). Residues 56–77 (PMYFFLSCLSLVEISYSSTIAP) traverse the membrane as a helical segment. Topologically, residues 78 to 98 (KFIIDLLAKIKTISLEGCLTQ) are extracellular. C95 and C187 are oxidised to a cystine. A helical transmembrane segment spans residues 99-118 (IFFFHFFGVAEILLIVVMAY). Topologically, residues 119–137 (DCYVAICKPLHYMNIISRQ) are cytoplasmic. The chain crosses the membrane as a helical span at residues 138–156 (LCHLLVAGSWLGGFCHSII). Topologically, residues 157 to 193 (QILVIIQLPFCGPNVIDHYFCDLQPLFKLACTDTFME) are extracellular. Residues 194 to 217 (GVIVLANSGLFSVFSFLILVSSYI) form a helical membrane-spanning segment. Residues 218 to 233 (VILVNLRNHSAEGRHK) lie on the Cytoplasmic side of the membrane. The chain crosses the membrane as a helical span at residues 234–256 (ALSTCASHITVVILFFGPAIFLY). At 257 to 267 (MRPSSTFTEDK) the chain is on the extracellular side. A helical transmembrane segment spans residues 268–287 (LVAVFYTVITPMLNPIIYTL). Topologically, residues 288–309 (RNAEVKIAIRRLWSKKENPGRE) are cytoplasmic.

This sequence belongs to the G-protein coupled receptor 1 family.

It localises to the cell membrane. Functionally, odorant receptor. The polypeptide is Olfactory receptor 4B1 (OR4B1) (Homo sapiens (Human)).